A 1244-amino-acid polypeptide reads, in one-letter code: MESRKRKSELEHYIDKLTDPPEKQRKMAEFYNSLRMFYKRRWNATLKLPHVQGVEVNLYRLYDTVMALGGWQKVAASDKWSDIAEMFGCKDDILCGDHAIKIIYMRYLSKFEQVETIGDVDDYVDNEMSRSRGRNATSFFATNECPISNNRMVQEYQHRDERGQIINEPDYARLTKSLISGLPNEIDFAMNVCMLLSHAGPKQLRICHAPTLLTLLVAHTGVYDEDDETMADMGKEWKRTTKHNFRDFWASSGVPLDMLMTFLDREIEAEYIDEDDQFFTGVSETFNVKDSRCWRLNQVTTIIRNLSFEPANRVTIVKTWPVMKFLIMCASCKWSPLYVAALDALSNLATDIDLTDKTLVYISQHAILRIITDGIFSLDKFKLVRSLEILTGLCGFEGNEAIICDWLNSATIAHIFEVVGVKDIMMCVYTLECLYQISEMGDTACDLISESPKAIQQLVSMATLEAVSFGPAGLAGMKVVEYQPSFTQGSNQQQNPHHSQGGHQLGHSNVRMGGLNHNQHHQQIGPPGAPGAAPMTVRQVIQNNLALQQVQRENLNREQYSTQSSQPHPPHTNVPPSPSILAHHSSGLVQQNGMKFDRRTGNLPVRPIAPSTNSGESQLEQLTEKWIRQNCVFEPAMSTPRGELYAAYVDDLRNLYHSMSGSLAMFSGVMKNLYPDVNFRMAQNGIMIVAQGIRLIRPHRLAPAASQSASESHPLMKKMLTSEPKEENGVLINGHAVQESGAERIIKTEPIRTDEPSVLIESQEQSVPKKQNDINGEETDEVELNSKIVTPEKKSITNGTVEVCQEPIQASKLFDENYANQIEGSEVSIEIREQFVNDTDNVKLESEKINGIICNGNSKVKKESMASRAAHIVAVAAACNGDLERMNVVSNGNDIEKEIEKETEKVEEETNEEKNKEVVETEVVDDAQESEKRKCVPPSSNPTDYMCDWDCCSIYYASPSHVLKHLSEEHVAEELRLLCRWNGCADPTPRNRWSLITHIQDSHCNEAQLKAASQKRKEGGGIAPVRGAPRAEVISRDINNHPGYAKNAAFDAIRRHAFNFLSRELTDEAEGPVTKSIRLTSCLILRNLARYSAEGRQKLRRHESHICWLALSRLESAHALSQLLSELHQAPAAEEEQQKMLSEVPSSASLSSMAGSSSQLPTVPDSPTSSVASAPMKESTSVSNKPTVHINRMLNFSSLNEKTPTSPQFTAGSSPHRHQPIQQHIPSQPSPLVQTTPVRAGAGI.

In terms of domain architecture, ARID spans 24–116 (QRKMAEFYNS…YLSKFEQVET (93 aa)). A compositionally biased stretch (polar residues) spans 486–496 (FTQGSNQQQNP). Disordered stretches follow at residues 486 to 534 (FTQG…GAAP), 556 to 583 (NREQ…ILAH), and 597 to 619 (DRRT…ESQL). Positions 497–508 (HHSQGGHQLGHS) are enriched in low complexity. Polar residues predominate over residues 556–566 (NREQYSTQSSQ). A compositionally biased stretch (pro residues) spans 567–578 (PHPPHTNVPPSP). Residues 610–619 (PSTNSGESQL) are compositionally biased toward polar residues. A DNA-binding region (RFX-type winged-helix) is located at residues 623 to 697 (TEKWIRQNCV…IVAQGIRLIR (75 aa)). The segment at 1134 to 1244 (EEEQQKMLSE…TTPVRAGAGI (111 aa)) is disordered. Positions 1142–1158 (SEVPSSASLSSMAGSSS) are enriched in low complexity. Composition is skewed to polar residues over residues 1159–1186 (QLPT…SNKP) and 1194–1212 (LNFS…FTAG). Low complexity predominate over residues 1220 to 1231 (PIQQHIPSQPSP).

In terms of assembly, component of the SWI/SNF-B (PBAF) chromatin remodeling complex.

Its subcellular location is the nucleus. Involved in transcriptional activation and repression of select genes by chromatin remodeling (alteration of DNA-nucleosome topology). Required for the stability of the SWI/SNF chromatin remodeling complex SWI/SNF-B (PBAF). Required for regulation of a stress response gene network, probably as part of the PBAF complex and perhaps acting in concert with histone demethylase jmjc-1. Binds to the ethanol and stress response elements (ESRE) in the promoter regions of hsp-16.1 and hsp-16.2, probably as part of the PBAF complex. In Caenorhabditis elegans, this protein is SWI/SNF chromatin remodeling complex subunit swsn-7.